The primary structure comprises 122 residues: Large ribosomal subunit protein uL14c (122 aa).

This sequence belongs to the universal ribosomal protein uL14 family. As to quaternary structure, part of the 50S ribosomal subunit.

The protein resides in the plastid. It localises to the chloroplast. In terms of biological role, binds to 23S rRNA. In Populus trichocarpa (Western balsam poplar), this protein is Large ribosomal subunit protein uL14c.